Reading from the N-terminus, the 298-residue chain is 4-diphosphocytidyl-2-C-methyl-D-erythritol kinase (298 aa).

K15 is a catalytic residue. 100–110 lines the ATP pocket; the sequence is PIAAGIGGGSA. Residue D142 is part of the active site.

It belongs to the GHMP kinase family. IspE subfamily.

It catalyses the reaction 4-CDP-2-C-methyl-D-erythritol + ATP = 4-CDP-2-C-methyl-D-erythritol 2-phosphate + ADP + H(+). The protein operates within isoprenoid biosynthesis; isopentenyl diphosphate biosynthesis via DXP pathway; isopentenyl diphosphate from 1-deoxy-D-xylulose 5-phosphate: step 3/6. In terms of biological role, catalyzes the phosphorylation of the position 2 hydroxy group of 4-diphosphocytidyl-2C-methyl-D-erythritol. In Rhodopseudomonas palustris (strain BisA53), this protein is 4-diphosphocytidyl-2-C-methyl-D-erythritol kinase.